We begin with the raw amino-acid sequence, 310 residues long: MKRIQIIDSHTGGEPTRLVVSGFPSLGDGTMAERRDVLAREHDRYRTACILEPRGSDVLVGALLCDPVAPDAAAGVIFFNNSGYLGMCGHGTIGVVRTLHHMGRIAPGVHRIETPVGTVEATLHDDLSVSVRNVPAYRHAQGVALDVPGYGPVKGDIAWGGNWFFLISDHGQRVAGDNVAALTAYASAVREGLERAGITGANGGEIDHIELFADDPEHDSRSFVLCPGLAYDRSPCGTGTSAKLACLAADGKLAPGAVWRQASVIGSVFHASYERADGGIVPTIRGSAHLSAEATLLIEEDDPFGWGIGS.

Cys88 acts as the Proton acceptor in catalysis. Substrate contacts are provided by residues 89-90 (GH), His208, and Asp232. Cys236 acts as the Proton donor in catalysis. 237–238 (GT) serves as a coordination point for substrate.

This sequence belongs to the proline racemase family.

The enzyme catalyses trans-4-hydroxy-L-proline = cis-4-hydroxy-D-proline. Catalyzes the epimerization of trans-4-hydroxy-L-proline (t4LHyp) to cis-4-hydroxy-D-proline (c4DHyp). Is likely involved in a degradation pathway that converts t4LHyp to alpha-ketoglutarate. Displays no proline racemase activity. The polypeptide is 4-hydroxyproline 2-epimerase (Burkholderia cenocepacia (strain ATCC BAA-245 / DSM 16553 / LMG 16656 / NCTC 13227 / J2315 / CF5610) (Burkholderia cepacia (strain J2315))).